Reading from the N-terminus, the 147-residue chain is Putative protein adenylyltransferase MJ1305 (147 aa).

The GSX(10)DXD motif motif lies at 32–46 (GSYARGTAVEYSDVD). Mg(2+) contacts are provided by Asp-44 and Asp-46.

This sequence belongs to the MntA antitoxin family. Mg(2+) serves as cofactor.

The catalysed reaction is L-tyrosyl-[protein] + ATP = O-(5'-adenylyl)-L-tyrosyl-[protein] + diphosphate. The enzyme catalyses O-(5'-adenylyl)-L-tyrosyl-[protein] + ATP = O-[5'-(adenylyl-(5'-&gt;3')-adenylyl)]-L-tyrosyl-[protein] + diphosphate. Its function is as follows. Putative antitoxin component of a putative type VII toxin-antitoxin (TA) system. Its cognate toxin might be MJ1304, which it might AMPylate. This is Putative protein adenylyltransferase MJ1305 from Methanocaldococcus jannaschii (strain ATCC 43067 / DSM 2661 / JAL-1 / JCM 10045 / NBRC 100440) (Methanococcus jannaschii).